Reading from the N-terminus, the 527-residue chain is MSDSRDPASDQMKQWKEQRASQRPDVLTTGGGNPIGDKLNIMTAGSRGPLLVQDVVFTDEMAHFDRERIPERVVHAKGAGAFGYFEVTHDITRYSKAKVFEHIGKRTPIAVRFSTVTGESGSADTVRDPRGFAVKFYTEDGNWDLVGNNTPIFFIRDAILFPSFIHSQKRNPQTHLKDPDMVWDFWSLRPESLHQVSFLFSDRGIPDGHRHMNGYGSHTFKLVNADGEAVYCKFHYKTDQGIKNLPVGEAGRLAQEDPDYGLRDLFNAIANGNYPSWTFYIQVMTFKEAETFPFNPFDLTKVWPHKDYPLIPVGKLVLNKNPVNYFAEVEQMAFDPSNMPPGIEPSPDKMLQGRLFAYPDTHRHRLGPNYLQIPVNCPYRARVANYQRDGPMCMHDNQGGAPNYYPNSFSAPEQQRSALEHSVQCAVDVKRFNSANEDNVTQVRTFYTKVLNEEERKRLCENIAGHLKDAQLFIQKKAVKNFTDVHPDYGARIQALLDKYNAEKPKNAIHTYTQAGSHMAAKGKANL.

A compositionally biased stretch (basic and acidic residues) spans 1–22 (MSDSRDPASDQMKQWKEQRASQ). The tract at residues 1–34 (MSDSRDPASDQMKQWKEQRASQRPDVLTTGGGNP) is disordered. Serine 2 is modified (N-acetylserine). The residue at position 9 (serine 9) is a Phosphoserine. Lysine 13 is modified (N6-succinyllysine). Serine 21 bears the Phosphoserine mark. Catalysis depends on residues histidine 75 and asparagine 148. Residues histidine 194, serine 201, arginine 203, and asparagine 213 each contribute to the NADP(+) site. Lysine 221 is modified (N6-succinyllysine). An N6-acetyllysine modification is found at lysine 233. NADP(+)-binding residues include lysine 237, tryptophan 303, histidine 305, and lysine 306. Residue lysine 306 is modified to N6-acetyllysine; alternate. Lysine 306 is modified (N6-succinyllysine; alternate). Residue tyrosine 358 participates in heme binding. Serine 417 and serine 422 each carry phosphoserine. At lysine 430 the chain carries N6-acetyllysine; alternate. At lysine 430 the chain carries N6-succinyllysine; alternate. Serine 434 bears the Phosphoserine mark. N6-acetyllysine; alternate is present on residues lysine 449 and lysine 480. N6-succinyllysine; alternate occurs at positions 449 and 480. Lysine 499 is subject to N6-acetyllysine. Threonine 511 carries the phosphothreonine modification. Phosphoserine is present on serine 517. At lysine 522 the chain carries N6-succinyllysine. The short motif at 524–527 (KANL) is the Microbody targeting signal; atypical element.

The protein belongs to the catalase family. In terms of assembly, homotetramer. Interacts (via microbody targeting signal) with PEX5, monomeric form interacts with PEX5, leading to its translocation into peroxisomes. Heme is required as a cofactor. It depends on NADP(+) as a cofactor.

It localises to the peroxisome matrix. The enzyme catalyses 2 H2O2 = O2 + 2 H2O. Catalyzes the degradation of hydrogen peroxide (H(2)O(2)) generated by peroxisomal oxidases to water and oxygen, thereby protecting cells from the toxic effects of hydrogen peroxide. Promotes growth of cells including T-cells, B-cells, myeloid leukemia cells, melanoma cells, mastocytoma cells and normal and transformed fibroblast cells. This is Catalase (Cat) from Mus musculus (Mouse).